A 478-amino-acid chain; its full sequence is Chromosomal replication initiator protein DnaA (478 aa).

The segment at 1–95 (MNKTLNPQEV…DVLEKEITEE (95 aa)) is domain I, interacts with DnaA modulators. Residues 96–141 (INDLVQSMEEEDFALIDHTKPVIPNFFDQNTRVNFGGGPNNHHPTT) are domain II. The tract at residues 142–358 (GVNPRFTFDN…GALLRIFALA (217 aa)) is domain III, AAA+ region. ATP-binding residues include G186, G188, K189, and T190. The domain IV, binds dsDNA stretch occupies residues 359 to 478 (SFNKEEINMT…YKLTQFILRR (120 aa)).

Belongs to the DnaA family. As to quaternary structure, oligomerizes as a right-handed, spiral filament on DNA at oriC.

It is found in the cytoplasm. Its function is as follows. Plays an essential role in the initiation and regulation of chromosomal replication. ATP-DnaA binds to the origin of replication (oriC) to initiate formation of the DNA replication initiation complex once per cell cycle. Binds the DnaA box (a 9 base pair repeat at the origin) and separates the double-stranded (ds)DNA. Forms a right-handed helical filament on oriC DNA; dsDNA binds to the exterior of the filament while single-stranded (ss)DNA is stabiized in the filament's interior. The ATP-DnaA-oriC complex binds and stabilizes one strand of the AT-rich DNA unwinding element (DUE), permitting loading of DNA polymerase. After initiation quickly degrades to an ADP-DnaA complex that is not apt for DNA replication. Binds acidic phospholipids. In Tropheryma whipplei (strain TW08/27) (Whipple's bacillus), this protein is Chromosomal replication initiator protein DnaA.